A 1400-amino-acid chain; its full sequence is RNA polymerase II-associated protein 1 (1400 aa).

Disordered regions lie at residues 35–54, 60–95, 161–215, and 269–310; these read KGSR…QDHR, DSLP…EERL, VSDN…GKGL, and REQT…DKLE. Basic and acidic residues-rich tracts occupy residues 39–54 and 85–95; these read RRGD…QDHR and LPHDEDPEERL. The segment covering 269 to 282 has biased composition (basic and acidic residues); sequence REQTETKATKEQNP. Phosphothreonine is present on threonine 329. The segment at 504–539 is disordered; it reads PSHDDKEDEDEDEELTKEKVNRKTPEEGSRPPPDLA. Acidic residues predominate over residues 509-518; the sequence is KEDEDEDEEL. Positions 519-539 are enriched in basic and acidic residues; sequence TKEKVNRKTPEEGSRPPPDLA.

It belongs to the RPAP1 family. Part of an RNA polymerase II complex that contains POLR2A, POLR2B, POLR2C, POLR2D, POLR2E, POLR2F, POLR2G, POLR2H, POLR2I, POLR2J, POLR2K, POLR2L, RPAP1, FCP1 plus the general transcription factors TFIIB and TFIIF.

The protein localises to the nucleus. Functionally, forms an interface between the RNA polymerase II enzyme and chaperone/scaffolding protein, suggesting that it is required to connect RNA polymerase II to regulators of protein complex formation. Required for interaction of the RNA polymerase II complex with acetylated histone H3. This chain is RNA polymerase II-associated protein 1 (Rpap1), found in Rattus norvegicus (Rat).